We begin with the raw amino-acid sequence, 296 residues long: D-alanine--D-alanine ligase (296 aa).

The 194-residue stretch at 99-292 folds into the ATP-grasp domain; the sequence is TYRVLDGYVN…FEELVDAIIQ (194 aa). ATP is bound at residue 125–176; that stretch reads GFPCVIKPRKEGSSIGVHICDNSNQLYNDLSEELKKYNEMMIQRYIEGRELT. Mg(2+) is bound by residues Asp-247, Glu-259, and Asn-261.

The protein belongs to the D-alanine--D-alanine ligase family. Mg(2+) is required as a cofactor. Requires Mn(2+) as cofactor.

The protein resides in the cytoplasm. The enzyme catalyses 2 D-alanine + ATP = D-alanyl-D-alanine + ADP + phosphate + H(+). It participates in cell wall biogenesis; peptidoglycan biosynthesis. Its function is as follows. Cell wall formation. The protein is D-alanine--D-alanine ligase of Pseudothermotoga lettingae (strain ATCC BAA-301 / DSM 14385 / NBRC 107922 / TMO) (Thermotoga lettingae).